We begin with the raw amino-acid sequence, 292 residues long: Inhibitory synaptic factor 1 (292 aa).

Disordered regions lie at residues Met-1–Ile-25, Ser-122–Arg-186, and Cys-198–Asn-292. The stretch at Glu-23–Asp-63 forms a coiled coil. Residues Cys-198–Gly-214 show a composition bias toward acidic residues. The segment covering Arg-263–Arg-285 has biased composition (polar residues).

It belongs to the INSYN1 family. As to quaternary structure, interacts with GPHN.

It is found in the postsynaptic density. Functionally, component of the protein machinery at the inhibitory synapses, probably acting as a scaffold. Inhibitory synapses dampen neuronal activity through postsynaptic hyperpolarization. This synaptic inhibition is fundamental for the functioning of the central nervous system, shaping and orchestrating the flow of information through neuronal networks to generate a precise neural code. The protein is Inhibitory synaptic factor 1 of Bos taurus (Bovine).